Here is a 56-residue protein sequence, read N- to C-terminus: Alpha-pompilidotoxin (56 aa).

Positions 1–22 (MFKQLILLALAAVFLLINISSA) are cleaved as a signal peptide. Residues 23–42 (EPAAEPNANAEPLAEASAEP) constitute a propeptide that is removed on maturation. Leu55 is modified (leucine amide).

In terms of tissue distribution, expressed by the venom gland.

It localises to the secreted. Its function is as follows. Inhibits sodium channels (Nav) inactivation. Shows two types of inhibitory activities on channels. Inhibition of hNav1.6/SCN8A shows a large increase in the steady-state current component without any increase in the slow component, whereas inhibition of hNav1.1/SCN1A, hNav1.2/SCN2A, hNav1.3/SCN3A and hNav1.7/SCN9A shows a large increase in the slow component with only a small steady-state component. Is 5-fold less potent than beta-PMTX for inducing repetitive action potentials in lobster neuromuscular junctions. This Anoplius samariensis (Solitary wasp) protein is Alpha-pompilidotoxin.